Here is a 185-residue protein sequence, read N- to C-terminus: MANAIIETAKERFAQSHQSLSREYASIRAGRANASLLDRIQVDYYGAPTPLNQLASITVPEARVLLISPFDKSSIKDIERALNASDLGITPANDGSVIRLVIPALTEETRKELAKEVKKVGENAKIAIRNIRRDAMDDAKKQEKAKEITEDELKTLEKDIQKATDDAIKEIDRMTAEKEKELLSG.

Belongs to the RRF family.

It is found in the cytoplasm. Its function is as follows. Responsible for the release of ribosomes from messenger RNA at the termination of protein biosynthesis. May increase the efficiency of translation by recycling ribosomes from one round of translation to another. In Streptococcus pyogenes serotype M18 (strain MGAS8232), this protein is Ribosome-recycling factor.